A 255-amino-acid polypeptide reads, in one-letter code: Type III pantothenate kinase (255 aa).

6-13 (DVGNTNTV) is a binding site for ATP. 108-111 (GADR) serves as a coordination point for substrate. D110 serves as the catalytic Proton acceptor. Residue D130 coordinates K(+). T133 serves as a coordination point for ATP. T185 is a binding site for substrate.

Belongs to the type III pantothenate kinase family. In terms of assembly, homodimer. It depends on NH4(+) as a cofactor. Requires K(+) as cofactor.

It localises to the cytoplasm. It carries out the reaction (R)-pantothenate + ATP = (R)-4'-phosphopantothenate + ADP + H(+). It functions in the pathway cofactor biosynthesis; coenzyme A biosynthesis; CoA from (R)-pantothenate: step 1/5. Functionally, catalyzes the phosphorylation of pantothenate (Pan), the first step in CoA biosynthesis. The protein is Type III pantothenate kinase of Hyphomonas neptunium (strain ATCC 15444).